A 76-amino-acid polypeptide reads, in one-letter code: RNA-binding protein KhpA (76 aa).

In terms of domain architecture, KH spans 29–76 (SLTYKLSVSKEDMGRVIGKQGRIAKAIRTLVYAVGSKNDKKIRLEIIE).

It belongs to the KhpA RNA-binding protein family. As to quaternary structure, forms a complex with KhpB.

The protein resides in the cytoplasm. Its function is as follows. A probable RNA chaperone. Forms a complex with KhpB which binds to cellular RNA and controls its expression. Plays a role in peptidoglycan (PG) homeostasis and cell length regulation. The protein is RNA-binding protein KhpA of Listeria innocua serovar 6a (strain ATCC BAA-680 / CLIP 11262).